The primary structure comprises 148 residues: Fluoride-specific ion channel FluC 2 (148 aa).

4 consecutive transmembrane segments (helical) span residues 23–43, 61–81, 92–112, and 120–140; these read LGHL…RLAV, GTLA…TLIF, FWVL…LHTL, and LLGG…ALAG. Residues G99 and T102 each contribute to the Na(+) site.

Belongs to the fluoride channel Fluc/FEX (TC 1.A.43) family.

It is found in the cell membrane. The catalysed reaction is fluoride(in) = fluoride(out). Na(+) is not transported, but it plays an essential structural role and its presence is essential for fluoride channel function. Its function is as follows. Fluoride-specific ion channel. Important for reducing fluoride concentration in the cell, thus reducing its toxicity. The sequence is that of Fluoride-specific ion channel FluC 2 from Rubrobacter xylanophilus (strain DSM 9941 / JCM 11954 / NBRC 16129 / PRD-1).